The following is an 883-amino-acid chain: Phosphoenolpyruvate carboxylase (883 aa).

Catalysis depends on residues H138 and K546.

It belongs to the PEPCase type 1 family. Requires Mg(2+) as cofactor.

The enzyme catalyses oxaloacetate + phosphate = phosphoenolpyruvate + hydrogencarbonate. In terms of biological role, forms oxaloacetate, a four-carbon dicarboxylic acid source for the tricarboxylic acid cycle. The polypeptide is Phosphoenolpyruvate carboxylase (Escherichia fergusonii (strain ATCC 35469 / DSM 13698 / CCUG 18766 / IAM 14443 / JCM 21226 / LMG 7866 / NBRC 102419 / NCTC 12128 / CDC 0568-73)).